The sequence spans 245 residues: Rhamnogalacturonan acetylesterase (245 aa).

The N-terminal stretch at 1–17 (MKSIALTSLSLLPSALA) is a signal peptide. Catalysis depends on S26, which acts as the Nucleophile. Residues C100 and C108 are joined by a disulfide bond. Catalysis depends on residues D204 and H207. Cysteines 226 and 244 form a disulfide.

Belongs to the 'GDSL' lipolytic enzyme family.

The protein localises to the secreted. It carries out the reaction Hydrolytic cleavage of 2-O-acetyl- or 3-O-acetyl groups of alpha-D-galacturonic acid in rhamnogalacturonan I.. Plays a key role in the degradation of rhamnogalacturonan in the cell wall. Involved in degradation of pectin. This chain is Rhamnogalacturonan acetylesterase, found in Emericella nidulans (strain FGSC A4 / ATCC 38163 / CBS 112.46 / NRRL 194 / M139) (Aspergillus nidulans).